Here is a 342-residue protein sequence, read N- to C-terminus: tRNA N6-adenosine threonylcarbamoyltransferase (342 aa).

Fe cation-binding residues include histidine 112 and histidine 116. Substrate-binding positions include 134-138, aspartate 167, glycine 180, and asparagine 280; that span reads LASGG. Aspartate 308 contributes to the Fe cation binding site.

The protein belongs to the KAE1 / TsaD family. Fe(2+) serves as cofactor.

The protein resides in the cytoplasm. It carries out the reaction L-threonylcarbamoyladenylate + adenosine(37) in tRNA = N(6)-L-threonylcarbamoyladenosine(37) in tRNA + AMP + H(+). Its function is as follows. Required for the formation of a threonylcarbamoyl group on adenosine at position 37 (t(6)A37) in tRNAs that read codons beginning with adenine. Is involved in the transfer of the threonylcarbamoyl moiety of threonylcarbamoyl-AMP (TC-AMP) to the N6 group of A37, together with TsaE and TsaB. TsaD likely plays a direct catalytic role in this reaction. The polypeptide is tRNA N6-adenosine threonylcarbamoyltransferase (Rickettsia canadensis (strain McKiel)).